Here is a 498-residue protein sequence, read N- to C-terminus: Neoxanthin synthase, chloroplastic (498 aa).

Residues 1–33 constitute a chloroplast transit peptide; it reads METLLKPLTSLLLSSPTPHRSIFQQNPPSLNPT. The interval 16 to 38 is disordered; the sequence is PTPHRSIFQQNPPSLNPTTKKKS. Polar residues predominate over residues 22 to 33; that stretch reads IFQQNPPSLNPT. 84-112 lines the NAD(+) pocket; that stretch reads VIIIGAGPAGLRLAEHVSKYGIKVCCVDP.

The protein belongs to the lycopene cyclase family.

Its subcellular location is the plastid. It is found in the chloroplast. It catalyses the reaction all-trans-violaxanthin = all-trans-neoxanthin. It participates in carotenoid biosynthesis; neoxanthin biosynthesis. In terms of biological role, involved in the synthesis of neoxanthin, the last product of carotenoid synthesis and a precursor of abscisic acid. This chain is Neoxanthin synthase, chloroplastic (NXS), found in Solanum tuberosum (Potato).